The following is a 568-amino-acid chain: MDQDAFFFERDPEAEGEAPRKQESLSDVIGLLDVVLSYKPTEIGEDRSWLHNIIDNPKENKSSCKSDDNNKDRAISTSTQDHRSSEESGISRRTGESKTETHARILDQQGIHRASRRGTSPNPLPENMGDERNTRIDEDSPNERRHQRSVPTDEDRKMAENSNKREEDQVEGFPEEVRGSTSLSDDGEGRTNNNGRSMETSSTHSTRITDVITNPSPELEEAVLQRKKRRPTTIKRNQTRSERTQNSELHKSTSGDSSNLEDHNTKTSQKIPPSKNEEPAVTQKNNHNHRKTKHTTNNANNNAKCLPTPEHDTTSNEEGTSNTSVDEMAKLLVSLGVMKSQHEFELSRRASHQFAKRMLKSANYKEMTFNLCGMLLSVEKSLGNKVEENRTLLKQIQEEIDSSRDLHKRFSEYQKEQNSLMMANLSTLHIITDRGGKTGDPSDTTRSPSVFTKGKDNKVKKTRFDPSMEALGGQEFKPDLIREDELREDIRNPVLEEHNNEPQASNASRLIPSTEKHTLHSLKLVIENSPLSRVEKKAYIKSLYKCRTNQEVKNVMELFEEDIDSLTN.

Positions 1–24 (MDQDAFFFERDPEAEGEAPRKQES) are disordered. The segment covering 7–24 (FFERDPEAEGEAPRKQES) has biased composition (basic and acidic residues). Positions 33 to 41 (DVVLSYKPT) are N0 binding. A disordered region spans residues 45-324 (EDRSWLHNII…SNEEGTSNTS (280 aa)). Basic and acidic residues-rich tracts occupy residues 56–105 (NPKE…HARI), 129–144 (GDERNTRIDEDSPNER), and 151–167 (PTDEDRKMAENSNKREE). A compositionally biased stretch (polar residues) spans 179 to 216 (GSTSLSDDGEGRTNNNGRSMETSSTHSTRITDVITNPS). Positions 239–253 (TRSERTQNSELHKST) are enriched in basic and acidic residues. Residues 295–304 (TTNNANNNAK) show a composition bias toward low complexity. Positions 344–411 (FELSRRASHQ…SSRDLHKRFS (68 aa)) are multimerization. Residues 387 to 416 (EENRTLLKQIQEEIDSSRDLHKRFSEYQKE) adopt a coiled-coil conformation. Positions 412–445 (EYQKEQNSLMMANLSTLHIITDRGGKTGDPSDTT) are l protein binding. Disordered stretches follow at residues 434 to 455 (RGGKTGDPSDTTRSPSVFTKGK) and 493 to 513 (PVLEEHNNEPQASNASRLIPS). The span at 441–450 (PSDTTRSPSV) shows a compositional bias: polar residues. Residues 479-568 (DLIREDELRE…FEEDIDSLTN (90 aa)) form an interaction with the nucleocapsid (N-RNA) region.

Belongs to the respirovirus P protein family. Homotetramer. Interacts (via multimerization domain) with polymerase L; this interaction forms the polymerase complex. Interacts (via N-terminus) with N0; this interaction allows P to chaperon N0 before encapsidation and form the N-P complex. Interacts (via C-terminus) with N-RNA template; this interaction positions the polymerase on the template.

Essential cofactor of the RNA polymerase L that plays a central role in the transcription and replication by forming the polymerase complex with RNA polymerase L and recruiting L to the genomic N-RNA template for RNA synthesis. Also plays a central role in the encapsidation of nascent RNA chains by forming the encapsidation complex with the nucleocapsid protein N (N-P complex). Acts as a chaperone for newly synthesized free N protein, so-called N0, allowing encapsidation of nascent RNA chains during replication. The nucleoprotein protein N prevents excessive phosphorylation of P, which leads to down-regulation of viral transcription/ replication. Participates, together with N, in the formation of viral factories (viroplasms), which are large inclusions in the host cytoplasm where replication takes place. Recruits host PI4KB and remodel the host endoplasmic reticulum membrane to form viral replication factories. The sequence is that of Phosphoprotein (P/C) from Homo sapiens (Human).